The sequence spans 647 residues: Protein cueball (647 aa).

The N-terminal stretch at 1-22 is a signal peptide; it reads MLWCPSVLVPLIAVAACLPVLA. Over 23–534 the chain is Extracellular; that stretch reads IGTPLEWEFA…CMTPSPWTSN (512 aa). 2 N-linked (GlcNAc...) asparagine glycosylation sites follow: Asn80 and Asn106. 3 LDL-receptor class B repeats span residues 119 to 166, 167 to 211, and 212 to 257; these read RNLF…DVCR, RKLY…DQLS, and DRIF…TNDA. Asn175 is a glycosylation site (N-linked (GlcNAc...) asparagine). Asn316 carries an N-linked (GlcNAc...) asparagine glycan. EGF-like domains are found at residues 365 to 401 and 436 to 473; these read DEKTAQLERDHCLNGGTYIADRVLCICPTGFKGSRCE and EISKCSGLCLNGGHCKLEDISEKPSCECPHNFAGERCE. Cystine bridges form between Cys376–Cys389, Cys391–Cys400, Cys440–Cys450, Cys444–Cys461, and Cys463–Cys472. Residue Asn475 is glycosylated (N-linked (GlcNAc...) asparagine). Residues 535-555 form a helical membrane-spanning segment; it reads VIIVLVLGIVSCFFLVAVIVH. Over 556–647 the chain is Cytoplasmic; that stretch reads GFRRLYKPKR…LIHNMDDDLY (92 aa).

Belongs to the cueball family.

The protein resides in the cell membrane. Functionally, has a role in spermatogenesis and oogenesis. The protein is Protein cueball of Drosophila persimilis (Fruit fly).